The primary structure comprises 484 residues: Aldehyde dehydrogenase family 3 member A2 (484 aa).

At 1-463 (MERQVQRLRQ…FLLKQFNKGR (463 aa)) the chain is on the cytoplasmic side. 185-190 (GNTAVG) is an NAD(+) binding site. Residues E207 and C241 contribute to the active site. Residue S293 is modified to Phosphoserine. A helical membrane pass occupies residues 464–484 (LQLLLLVCLVAVAAVIVKDQL). The Prevents secretion from ER signature appears at 481 to 484 (KDQL).

The protein belongs to the aldehyde dehydrogenase family. Homodimer. The N-terminus is blocked.

It is found in the microsome membrane. It localises to the endoplasmic reticulum membrane. It carries out the reaction an aldehyde + NAD(+) + H2O = a carboxylate + NADH + 2 H(+). The enzyme catalyses a fatty aldehyde + NAD(+) + H2O = a fatty acid + NADH + 2 H(+). It catalyses the reaction (2E)-hexadecenal + NAD(+) + H2O = (E)-hexadec-2-enoate + NADH + 2 H(+). The catalysed reaction is hexadecanoate + NADH + 2 H(+) = hexadecanal + NAD(+) + H2O. It carries out the reaction 22-oxodocosanoate + NAD(+) + H2O = docosanedioate + NADH + 2 H(+). The enzyme catalyses 2,6,10,14-tetramethylpentadecanal + NAD(+) + H2O = 2,6,10,14-tetramethylpentadecanoate + NADH + 2 H(+). It catalyses the reaction octadecanal + NAD(+) + H2O = octadecanoate + NADH + 2 H(+). The catalysed reaction is dodecanoate + NADH + 2 H(+) = dodecanal + NAD(+) + H2O. It carries out the reaction decanal + NAD(+) + H2O = decanoate + NADH + 2 H(+). The enzyme catalyses tetradecanal + NAD(+) + H2O = tetradecanoate + NADH + 2 H(+). It catalyses the reaction octanal + NAD(+) + H2O = octanoate + NADH + 2 H(+). The catalysed reaction is heptanal + NAD(+) + H2O = heptanoate + NADH + 2 H(+). It carries out the reaction (2E,6E)-farnesal + NAD(+) + H2O = (2E,6E)-farnesoate + NADH + 2 H(+). Catalyzes the oxidation of medium and long-chain aliphatic aldehydes to fatty acids. Active on a variety of saturated and unsaturated aliphatic aldehydes between 6 and 24 carbons in length. Responsible for conversion of the sphingosine 1-phosphate (S1P) degradation product hexadecenal to hexadecenoic acid. The polypeptide is Aldehyde dehydrogenase family 3 member A2 (Aldh3a2) (Rattus norvegicus (Rat)).